We begin with the raw amino-acid sequence, 512 residues long: MESVIFSINGEIIQVNKEIITASPYNFFKRIQDHHLKDEAIILNGINYHAFESLLDYMRWKKINITINNVEMILVAAIIIDVPPVVDLCVKTMIHNINSTNCIRMFNFSKRYGIKKLYNASMSEIINNITAVTSDPEFGKLSKDELTTILSHEDVNVNHEDVTAMILLKWIHKNPNDVDIINILHPKFMTNTMRNAISLLGLTISKSTKPVTRNGIKHNIVVIKNSDYISTITHYSPRTEYWTIVGNTDRQFYNANVLHNCLYIIGGMINNRHVYSVSRVDLKTKKWKTVTNMSSLKSEVSTCVNDGKLYVIGGLEFSISTGVAEYLKHGTSKWIRLPNLITPRYSGASVFVNDDIYVMGGVYTTYEKYVVLNDVECFTKNRWIKKSPMPRHHSIVYAVEYDGDIYAITGITHETRNYLYKYIVKEDKWIELYMYFNHVGKMFVCSCGDYILIIADAKYEYYPKSNTWNLFDMSTRNIEYYDMFTKDETPKCNVTHKSLPSFLSNCEKQFLQ.

The BTB domain occupies glutamate 2 to isoleucine 67. Residues cysteine 102–asparagine 176 form the BACK domain. 6 Kelch repeats span residues isoleucine 216–cysteine 261, leucine 262–glycine 307, leucine 309–aspartate 354, isoleucine 356–glycine 403, isoleucine 405–aspartate 449, and leucine 452–serine 498.

The protein belongs to the poxviruses Kelch family.

The sequence is that of Kelch repeat protein C2 from Bos taurus (Bovine).